A 345-amino-acid polypeptide reads, in one-letter code: RNA polymerase II holoenzyme cyclin-like subunit (345 aa).

The region spanning Glu-23–Ile-147 is the Cyclin N-terminal domain.

This sequence belongs to the cyclin family. Cyclin C subfamily. Component of the SRB8-11 complex, a regulatory module of the Mediator complex.

The protein resides in the nucleus. Component of the SRB8-11 complex. The SRB8-11 complex is a regulatory module of the Mediator complex which is itself involved in regulation of basal and activated RNA polymerase II-dependent transcription. The SRB8-11 complex may be involved in the transcriptional repression of a subset of genes regulated by Mediator. It may inhibit the association of the Mediator complex with RNA polymerase II to form the holoenzyme complex. The SRB8-11 complex phosphorylates the C-terminal domain (CTD) of the largest subunit of RNA polymerase II. The polypeptide is RNA polymerase II holoenzyme cyclin-like subunit (SSN8) (Debaryomyces hansenii (strain ATCC 36239 / CBS 767 / BCRC 21394 / JCM 1990 / NBRC 0083 / IGC 2968) (Yeast)).